A 42-amino-acid chain; its full sequence is Potassium channel toxin gamma-KTx 1.3 (42 aa).

4 disulfide bridges follow: Cys5–Cys23, Cys11–Cys34, Cys20–Cys39, and Cys24–Cys41.

The protein belongs to the ergtoxin family. Gamma-KTx 1 subfamily. In terms of tissue distribution, expressed by the venom gland.

It is found in the secreted. Its function is as follows. Blocks Kv11/ERG potassium channels. The sequence is that of Potassium channel toxin gamma-KTx 1.3 from Centruroides gracilis (Slenderbrown scorpion).